The sequence spans 394 residues: Elongation factor Tu (394 aa).

The region spanning 10-204 (KEHANIGTIG…AVDDYIPTPE (195 aa)) is the tr-type G domain. Residues 19 to 26 (GHVDHGKT) are G1. GTP is bound at residue 19-26 (GHVDHGKT). Threonine 26 serves as a coordination point for Mg(2+). Residues 60–64 (GITIN) form a G2 region. A G3 region spans residues 81–84 (DCPG). GTP contacts are provided by residues 81–85 (DCPGH) and 136–139 (NKVD). Positions 136 to 139 (NKVD) are G4. Residues 174 to 176 (SAL) form a G5 region.

This sequence belongs to the TRAFAC class translation factor GTPase superfamily. Classic translation factor GTPase family. EF-Tu/EF-1A subfamily. In terms of assembly, monomer.

It is found in the cytoplasm. It catalyses the reaction GTP + H2O = GDP + phosphate + H(+). In terms of biological role, GTP hydrolase that promotes the GTP-dependent binding of aminoacyl-tRNA to the A-site of ribosomes during protein biosynthesis. The polypeptide is Elongation factor Tu (Staphylococcus haemolyticus (strain JCSC1435)).